The sequence spans 222 residues: Glutathione-specific gamma-glutamylcyclotransferase 1 (222 aa).

Positions 1-22 (MKQESAAPNTPPTSQSPTPSAQ) are enriched in low complexity. The interval 1–24 (MKQESAAPNTPPTSQSPTPSAQFP) is disordered. Position 35–40 (35–40 (IFGYGS)) interacts with substrate. The active-site Proton acceptor is the glutamate 115.

Belongs to the gamma-glutamylcyclotransferase family. ChaC subfamily. Interacts with NOTCH1 (via extracellular region).

The protein localises to the cytoplasm. Its subcellular location is the cytosol. It localises to the golgi apparatus. The protein resides in the trans-Golgi network. It carries out the reaction glutathione = L-cysteinylglycine + 5-oxo-L-proline. In terms of biological role, catalyzes the cleavage of glutathione into 5-oxo-L-proline and a Cys-Gly dipeptide. Acts specifically on glutathione, but not on other gamma-glutamyl peptides. Glutathione depletion is an important factor for apoptosis initiation and execution. Acts as a pro-apoptotic component of the unfolded protein response pathway by mediating the pro-apoptotic effects of the ATF4-ATF3-DDIT3/CHOP cascade. Negative regulator of Notch signaling pathway involved in embryonic neurogenesis: acts by inhibiting Notch cleavage by furin, maintaining Notch in an immature inactive form, thereby promoting neurogenesis in embryos. This Homo sapiens (Human) protein is Glutathione-specific gamma-glutamylcyclotransferase 1.